The primary structure comprises 455 residues: Acid sphingomyelinase-like phosphodiesterase 3b (455 aa).

An N-terminal signal peptide occupies residues 1-18 (MRLLAWLIFLANWGGARA). Zn(2+)-binding residues include Asp28 and His30. Cys45 and Cys64 are disulfide-bonded. Asn72 carries an N-linked (GlcNAc...) asparagine glycan. Zn(2+) contacts are provided by Asp93 and Asn134. The N-linked (GlcNAc...) asparagine glycan is linked to Asn164. His236, His277, and His279 together coordinate Zn(2+). Asn343 carries an N-linked (GlcNAc...) asparagine glycan. 2 cysteine pairs are disulfide-bonded: Cys405–Cys409 and Cys415–Cys428.

It belongs to the acid sphingomyelinase family. In terms of assembly, interacts with TLR4, TLR7, TLR8 and TLR9. Zn(2+) is required as a cofactor. Post-translationally, N-glycosylated.

It localises to the secreted. It is found in the cell membrane. Functionally, lipid-modulating phosphodiesterase. Active on the surface of macrophages and dendritic cells and strongly influences macrophage lipid composition and membrane fluidity. Acts as a negative regulator of Toll-like receptor signaling. Has in vitro phosphodiesterase activity, but the physiological substrate is unknown. Lacks activity with phosphocholine-containing lipids, but can cleave CDP-choline, and can release phosphate from ATP and ADP (in vitro). In Homo sapiens (Human), this protein is Acid sphingomyelinase-like phosphodiesterase 3b (SMPDL3B).